We begin with the raw amino-acid sequence, 299 residues long: Recombination-associated protein RdgC (299 aa).

Belongs to the RdgC family.

It is found in the cytoplasm. It localises to the nucleoid. Functionally, may be involved in recombination. The protein is Recombination-associated protein RdgC of Laribacter hongkongensis (strain HLHK9).